A 544-amino-acid polypeptide reads, in one-letter code: MSRCAQAAEVAATVPGAGVGNVGLRPPMVPRQASFFPPPVPNPFVQQTQIGSARRVQIVLLGIILLPIRVLLVALILLLAWPFAAISTVCCPEKLTHPITGWRRKITQTALKFLGRAMFFSMGFIVAVKGKIASPLEAPVFVAAPHSTFFDGIACVVAGLPSMVSRNENAQVPLIGRLLRAVQPVLVSRVDPDSRKNTINEIIKRTTSGGEWPQILVFPEGTCTNRSCLITFKPGAFIPGVPVQPVLLRYPNKLDTVTWTWQGYTFIQLCMLTFCQLFTKVEVEFMPVQVPNDEEKNDPVLFANKVRNLMAEALGIPVTDHTYEDCRLMISAGQLTLPMEAGLVEFTKISRKLKLDWDGVRKHLDEYASIASSSKGGRIGIEEFAKYLKLPVSDVLRQLFALFDRNHDGSIDFREYVIGLAVLCNPSNTEEIIQVAFKLFDVDEDGYITEEEFSTILQASLGVPDLDVSGLFKEIAQGDSISYEEFKSFALKHPEYAKIFTTYLDLQTCHVFSLPKEVQTTPSTASNKVSPEKHEESTSDKKDD.

The Cytoplasmic portion of the chain corresponds to 1–57 (MSRCAQAAEVAATVPGAGVGNVGLRPPMVPRQASFFPPPVPNPFVQQTQIGSARRVQ). Residues 58-78 (IVLLGIILLPIRVLLVALILL) traverse the membrane as a helical; Signal-anchor for type II membrane protein segment. Over 79 to 544 (LAWPFAAIST…EESTSDKKDD (466 aa)) the chain is Lumenal. The short motif at 146–151 (HSTFFD) is the HXXXXD motif element. The short motif at 220–223 (EGTC) is the EGTC motif element. EF-hand domains lie at 391–426 (PVSDVLRQLFALFDRNHDGSIDFREYVIGLAVLCNP) and 428–463 (NTEEIIQVAFKLFDVDEDGYITEEEFSTILQASLGV). The Ca(2+) site is built by aspartate 404, asparagine 406, aspartate 408, serine 410, glutamate 415, aspartate 441, aspartate 443, aspartate 445, tyrosine 447, and glutamate 452. Polar residues predominate over residues 518-529 (VQTTPSTASNKV). The interval 518–544 (VQTTPSTASNKVSPEKHEESTSDKKDD) is disordered. The span at 530 to 544 (SPEKHEESTSDKKDD) shows a compositional bias: basic and acidic residues.

The protein belongs to the 1-acyl-sn-glycerol-3-phosphate acyltransferase family.

The protein localises to the endoplasmic reticulum membrane. It localises to the golgi apparatus membrane. The protein resides in the cell membrane. It is found in the lipid droplet. It carries out the reaction a 1-acyl-sn-glycero-3-phosphocholine + an acyl-CoA = a 1,2-diacyl-sn-glycero-3-phosphocholine + CoA. It catalyses the reaction a 1-O-alkyl-sn-glycero-3-phosphocholine + acetyl-CoA = a 1-O-alkyl-2-acetyl-sn-glycero-3-phosphocholine + CoA. The enzyme catalyses a 1-acyl-sn-glycero-3-phosphate + an acyl-CoA = a 1,2-diacyl-sn-glycero-3-phosphate + CoA. The catalysed reaction is a 1-O-(1Z-alkenyl)-sn-glycero-3-phosphocholine + an acyl-CoA = a 1-O-(1Z-alkenyl)-2-acyl-sn-glycero-3-phosphocholine + CoA. It carries out the reaction 1-hexadecanoyl-sn-glycero-3-phosphate + (9Z)-octadecenoyl-CoA = 1-hexadecanoyl-2-(9Z-octadecenoyl)-sn-glycero-3-phosphate + CoA. It catalyses the reaction 1-(9Z-octadecenoyl)-sn-glycero-3-phosphate + (9Z)-octadecenoyl-CoA = 1,2-di-(9Z-octadecenoyl)-sn-glycero-3-phosphate + CoA. The enzyme catalyses 1-(9Z-octadecenoyl)-sn-glycero-3-phosphate + hexadecanoyl-CoA = 1-(9Z)-octadecenoyl-2-hexadecanoyl-sn-glycero-3-phosphate + CoA. The catalysed reaction is 1-heptadecanoyl-sn-glycero-3-phosphate + (9Z)-octadecenoyl-CoA = 1-heptadecanoyl-2-(9Z)-octadecenoyl-sn-glycero-3-phosphate + CoA. It carries out the reaction 1-octadecanoyl-sn-glycero-3-phosphate + (9Z)-octadecenoyl-CoA = 1-octadecanoyl-2-(9Z-octadecenoyl)-sn-glycero-3-phosphate + CoA. It catalyses the reaction heptadecanoyl-CoA + 1-(9Z-octadecenoyl)-sn-glycero-3-phosphate = 1-(9Z)-octadecenoyl-2-heptadecanoyl-sn-glycero-3-phosphate + CoA. The enzyme catalyses 1-(9Z-octadecenoyl)-sn-glycero-3-phosphate + (9Z,12Z)-octadecadienoyl-CoA = 1-(9Z)-octadecenoyl-2-(9Z,12Z)-octadecadienoyl-sn-glycero-3-phosphate + CoA. The catalysed reaction is 1-(9Z-octadecenoyl)-sn-glycero-3-phosphate + tetradecanoyl-CoA = 1-(9Z)-octadecenoyl-2-tetradecanoyl-sn-glycero-3-phosphate + CoA. It carries out the reaction pentadecanoyl-CoA + 1-(9Z-octadecenoyl)-sn-glycero-3-phosphate = 1-(9Z)-octadecenoyl-2-pentadecanoyl-sn-glycero-3-phosphate + CoA. It catalyses the reaction nonadecanoyl-CoA + 1-(9Z-octadecenoyl)-sn-glycero-3-phosphate = 1-(9Z)-octadecenoyl-2-nonadecanoyl-sn-glycero-3-phosphate + CoA. The enzyme catalyses 1-hexadecanoyl-sn-glycero-3-phosphocholine + (9Z)-octadecenoyl-CoA = 1-hexadecanoyl-2-(9Z-octadecenoyl)-sn-glycero-3-phosphocholine + CoA. The catalysed reaction is 1-O-hexadecyl-sn-glycero-3-phosphocholine + acetyl-CoA = 1-O-hexadecyl-2-acetyl-sn-glycero-3-phosphocholine + CoA. It carries out the reaction 1-O-octadecyl-sn-glycero-3-phosphocholine + acetyl-CoA = 1-O-octadecyl-2-acetyl-sn-glycero-3-phosphocholine + CoA. It catalyses the reaction 1-hexadecanoyl-sn-glycero-3-phosphocholine + acetyl-CoA = 1-hexadecanoyl-2-acetyl-sn-glycero-3-phosphocholine + CoA. The enzyme catalyses 1-octadecanoyl-sn-glycero-3-phosphocholine + acetyl-CoA = 1-octadecanoyl-2-acetyl-sn-glycero-3-phosphocholine + CoA. The catalysed reaction is a 1-O-(1Z-alkenyl)-sn-glycero-3-phosphocholine + acetyl-CoA = 1-O-(1Z)-alkenyl-2-acetyl-sn-glycero-3-phosphocholine + CoA. It carries out the reaction 1-O-octadecyl-sn-glycero-3-phosphocholine + (5Z,8Z,11Z,14Z)-eicosatetraenoyl-CoA = 1-O-octadecyl-2-(5Z,8Z,11Z,14Z)-eicosatetraenoyl-sn-glycero-3-phosphocholine + CoA. It participates in lipid metabolism; phospholipid metabolism. In terms of biological role, exhibits both acyltransferase and acetyltransferase activities. Catalyzes the conversion of lysophosphatidylcholine (1-acyl-sn-glycero-3-phosphocholine or LPC) into phosphatidylcholine (1,2-diacyl-sn-glycero-3-phosphocholine or PC). Catalyzes the conversion 1-acyl-sn-glycerol-3-phosphate (lysophosphatidic acid or LPA) into 1,2-diacyl-sn-glycerol-3-phosphate (phosphatidic acid or PA) by incorporating an acyl moiety at the sn-2 position of the glycerol backbone. Involved in platelet-activating factor (PAF) biosynthesis by catalyzing the conversion of the PAF precursor, 1-O-alkyl-sn-glycero-3-phosphocholine (lyso-PAF) into 1-O-alkyl-2-acetyl-sn-glycero-3-phosphocholine (PAF). Also converts lyso-PAF to 1-O-alkyl-2-acyl-sn-glycero-3-phosphocholine (PC), a major component of cell membranes and a PAF precursor. Under resting conditions, acyltransferase activity is preferred. Upon acute inflammatory stimulus, acetyltransferase activity is enhanced and PAF synthesis increases. Involved in the regulation of lipid droplet number and size. The chain is Lysophosphatidylcholine acyltransferase 2 (LPCAT2) from Homo sapiens (Human).